Here is a 407-residue protein sequence, read N- to C-terminus: Argininosuccinate synthase (407 aa).

ATP is bound by residues 16-24 (AYSGGLDTS) and alanine 44. Residues tyrosine 96 and serine 101 each coordinate L-citrulline. An ATP-binding site is contributed by glycine 126. Positions 128, 132, and 133 each coordinate L-aspartate. Asparagine 132 is a binding site for L-citrulline. The L-citrulline site is built by arginine 136, serine 185, serine 194, glutamate 270, and tyrosine 282.

It belongs to the argininosuccinate synthase family. Type 1 subfamily. Homotetramer.

The protein resides in the cytoplasm. It catalyses the reaction L-citrulline + L-aspartate + ATP = 2-(N(omega)-L-arginino)succinate + AMP + diphosphate + H(+). It functions in the pathway amino-acid biosynthesis; L-arginine biosynthesis; L-arginine from L-ornithine and carbamoyl phosphate: step 2/3. This chain is Argininosuccinate synthase, found in Shewanella sp. (strain ANA-3).